Consider the following 250-residue polypeptide: Proteasome subunit alpha (250 aa).

This sequence belongs to the peptidase T1A family. As to quaternary structure, the 20S proteasome core is composed of 14 alpha and 14 beta subunits that assemble into four stacked heptameric rings, resulting in a barrel-shaped structure. The two inner rings, each composed of seven catalytic beta subunits, are sandwiched by two outer rings, each composed of seven alpha subunits. The catalytic chamber with the active sites is on the inside of the barrel. Has a gated structure, the ends of the cylinder being occluded by the N-termini of the alpha-subunits. Is capped at one or both ends by the proteasome regulatory ATPase, PAN.

It is found in the cytoplasm. The formation of the proteasomal ATPase PAN-20S proteasome complex, via the docking of the C-termini of PAN into the intersubunit pockets in the alpha-rings, triggers opening of the gate for substrate entry. Interconversion between the open-gate and close-gate conformations leads to a dynamic regulation of the 20S proteasome proteolysis activity. In terms of biological role, component of the proteasome core, a large protease complex with broad specificity involved in protein degradation. This Haloquadratum walsbyi (strain DSM 16790 / HBSQ001) protein is Proteasome subunit alpha.